Here is a 705-residue protein sequence, read N- to C-terminus: Elongation factor G (705 aa).

The tr-type G domain maps to 8–289 (VNYRNIGISA…TVINYLPSPK (282 aa)). Residues 17–24 (AHIDAGKT), 88–92 (DTPGH), and 142–145 (NKMD) contribute to the GTP site.

This sequence belongs to the TRAFAC class translation factor GTPase superfamily. Classic translation factor GTPase family. EF-G/EF-2 subfamily.

The protein resides in the cytoplasm. In terms of biological role, catalyzes the GTP-dependent ribosomal translocation step during translation elongation. During this step, the ribosome changes from the pre-translocational (PRE) to the post-translocational (POST) state as the newly formed A-site-bound peptidyl-tRNA and P-site-bound deacylated tRNA move to the P and E sites, respectively. Catalyzes the coordinated movement of the two tRNA molecules, the mRNA and conformational changes in the ribosome. The protein is Elongation factor G of Wigglesworthia glossinidia brevipalpis.